The chain runs to 701 residues: Serologically defined colon cancer antigen 8 homolog (701 aa).

Residues 1–13 (MKPSLESDEEEEL) are compositionally biased toward acidic residues. Disordered regions lie at residues 1–67 (MKPS…VQQS) and 84–114 (ANIQ…GVHN). Residues 45-67 (SEPNQQELLSSVQQNPCSPVQQS) show a composition bias toward polar residues. Coiled coils occupy residues 119–173 (INNQ…LKEY), 203–258 (HKWR…AVAA), and 323–695 (QQVK…AGKR). The interval 364–387 (LASEQDKISQAREAARSESKKERE) is disordered.

The protein resides in the cytoplasm. The protein localises to the cytoskeleton. It is found in the microtubule organizing center. It localises to the centrosome. Its subcellular location is the centriole. The protein resides in the cilium basal body. The protein localises to the cell junction. Plays a role in the establishment of cell polarity and epithelial lumen formation. Also plays an essential role in ciliogenesis and subsequent Hedgehog signaling pathway that requires the presence of intact primary cilia for pathway activation. Mechanistically, interacts with and mediates RABEP2 centrosomal localization which is critical for ciliogenesis. The polypeptide is Serologically defined colon cancer antigen 8 homolog (Sdccag8) (Danio rerio (Zebrafish)).